The following is a 230-amino-acid chain: Cytochrome c oxidase subunit 2 (230 aa).

The Mitochondrial intermembrane segment spans residues 1-14; the sequence is MAHPTQLGFQDAAS. The chain crosses the membrane as a helical span at residues 15–45; sequence PVMEELLHFHDHALMIVFLISALVLYVIITT. Over 46–59 the chain is Mitochondrial matrix; the sequence is VSTKLTNMYILDSQ. A helical membrane pass occupies residues 60-87; it reads EIEIVWTVLPALILILIALPSLRILYLM. Residues 88–230 are Mitochondrial intermembrane-facing; that stretch reads DEINDPHLTI…NWSTLMLKDA (143 aa). Residues His161, Cys196, Glu198, Cys200, His204, and Met207 each coordinate Cu cation. Glu198 is a Mg(2+) binding site.

This sequence belongs to the cytochrome c oxidase subunit 2 family. As to quaternary structure, component of the cytochrome c oxidase (complex IV, CIV), a multisubunit enzyme composed of 14 subunits. The complex is composed of a catalytic core of 3 subunits MT-CO1, MT-CO2 and MT-CO3, encoded in the mitochondrial DNA, and 11 supernumerary subunits COX4I, COX5A, COX5B, COX6A, COX6B, COX6C, COX7A, COX7B, COX7C, COX8 and NDUFA4, which are encoded in the nuclear genome. The complex exists as a monomer or a dimer and forms supercomplexes (SCs) in the inner mitochondrial membrane with NADH-ubiquinone oxidoreductase (complex I, CI) and ubiquinol-cytochrome c oxidoreductase (cytochrome b-c1 complex, complex III, CIII), resulting in different assemblies (supercomplex SCI(1)III(2)IV(1) and megacomplex MCI(2)III(2)IV(2)). Found in a complex with TMEM177, COA6, COX18, COX20, SCO1 and SCO2. Interacts with TMEM177 in a COX20-dependent manner. Interacts with COX20. Interacts with COX16. Cu cation is required as a cofactor.

Its subcellular location is the mitochondrion inner membrane. The catalysed reaction is 4 Fe(II)-[cytochrome c] + O2 + 8 H(+)(in) = 4 Fe(III)-[cytochrome c] + 2 H2O + 4 H(+)(out). In terms of biological role, component of the cytochrome c oxidase, the last enzyme in the mitochondrial electron transport chain which drives oxidative phosphorylation. The respiratory chain contains 3 multisubunit complexes succinate dehydrogenase (complex II, CII), ubiquinol-cytochrome c oxidoreductase (cytochrome b-c1 complex, complex III, CIII) and cytochrome c oxidase (complex IV, CIV), that cooperate to transfer electrons derived from NADH and succinate to molecular oxygen, creating an electrochemical gradient over the inner membrane that drives transmembrane transport and the ATP synthase. Cytochrome c oxidase is the component of the respiratory chain that catalyzes the reduction of oxygen to water. Electrons originating from reduced cytochrome c in the intermembrane space (IMS) are transferred via the dinuclear copper A center (CU(A)) of subunit 2 and heme A of subunit 1 to the active site in subunit 1, a binuclear center (BNC) formed by heme A3 and copper B (CU(B)). The BNC reduces molecular oxygen to 2 water molecules using 4 electrons from cytochrome c in the IMS and 4 protons from the mitochondrial matrix. This Formosania lacustris (Oriental stream loach) protein is Cytochrome c oxidase subunit 2 (mt-co2).